Here is a 298-residue protein sequence, read N- to C-terminus: Glutamyl-Q tRNA(Asp) synthetase (298 aa).

Residues 8-12 (RFAPS) and Glu44 contribute to the L-glutamate site. The 'HIGH' region signature appears at 11-21 (PSPTGPLHFGS). Residues Cys100, Cys102, Tyr123, and Cys127 each coordinate Zn(2+). L-glutamate-binding residues include Tyr183 and Arg201. Positions 239–243 (KLSKQ) match the 'KMSKS' region motif. Lys242 serves as a coordination point for ATP.

It belongs to the class-I aminoacyl-tRNA synthetase family. GluQ subfamily. It depends on Zn(2+) as a cofactor.

In terms of biological role, catalyzes the tRNA-independent activation of glutamate in presence of ATP and the subsequent transfer of glutamate onto a tRNA(Asp). Glutamate is transferred on the 2-amino-5-(4,5-dihydroxy-2-cyclopenten-1-yl) moiety of the queuosine in the wobble position of the QUC anticodon. The polypeptide is Glutamyl-Q tRNA(Asp) synthetase (Burkholderia cenocepacia (strain ATCC BAA-245 / DSM 16553 / LMG 16656 / NCTC 13227 / J2315 / CF5610) (Burkholderia cepacia (strain J2315))).